A 224-amino-acid chain; its full sequence is MKNIEKLEQSLTYEFKDKNLLIHALTHKSFKKSYNNERLEFLGDAVLDLVVGEYLFHKFAKDAEGDLSKLRAALVNEKSFAKIANSLNLGDFILMSVAEENNGGKEKPSILSDALEAIIGAIHLEAGFEFAKTIALRLIEKNFPQIDAKILIKDYKTKLQEITQGKIGQTPQYETVRAFGPDHLKQFEIALMLDGKELARAIAGSKKEAQQMAAKIALEKLGAL.

The RNase III domain maps to isoleucine 4–glycine 127. Glutamate 40 serves as a coordination point for Mg(2+). Residue aspartate 44 is part of the active site. Residues aspartate 113 and glutamate 116 each coordinate Mg(2+). Residue glutamate 116 is part of the active site. A DRBM domain is found at aspartate 154–alanine 223.

It belongs to the ribonuclease III family. Homodimer. Requires Mg(2+) as cofactor.

Its subcellular location is the cytoplasm. The enzyme catalyses Endonucleolytic cleavage to 5'-phosphomonoester.. In terms of biological role, digests double-stranded RNA. Involved in the processing of primary rRNA transcript to yield the immediate precursors to the large and small rRNAs (23S and 16S). Also processes some mRNAs, and tRNAs when they are encoded in the rRNA operon. CRISPR (clustered regularly interspaced short palindromic repeat) is an adaptive immune system that provides protection against mobile genetic elements (viruses, transposable elements and conjugative plasmids). CRISPR clusters contain spacers, sequences complementary to antecedent mobile elements, and target invading nucleic acids. CRISPR clusters are transcribed and processed into CRISPR RNA (crRNA). In this organism endogenous ribonuclease 3 and Cas9 are required for correct coprocessing of pre-crRNA and the trans-encoded small RNA (tracrRNA). Cas9, crRNA and tracrRNA are required for cleavage of invading DNA. Complements pre-crRNA and tracrRNA coprocessing defects in an rnc deletion in S.pyogenes strain 370. In Campylobacter jejuni subsp. jejuni serotype O:2 (strain ATCC 700819 / NCTC 11168), this protein is Ribonuclease 3.